A 545-amino-acid polypeptide reads, in one-letter code: Lysine--tRNA ligase (545 aa).

A 'HIGH' region motif is present at residues 33 to 41 (VSGLQHIGR). The short motif at 288-292 (DMSSS) is the 'KMSKS' region element.

It belongs to the class-I aminoacyl-tRNA synthetase family.

Its subcellular location is the cytoplasm. It carries out the reaction tRNA(Lys) + L-lysine + ATP = L-lysyl-tRNA(Lys) + AMP + diphosphate. This chain is Lysine--tRNA ligase (lysS), found in Aeropyrum pernix (strain ATCC 700893 / DSM 11879 / JCM 9820 / NBRC 100138 / K1).